Consider the following 182-residue polypeptide: Dual-action ribosomal maturation protein DarP (182 aa).

The segment at 1–20 (MNKQPEEWQDPQSLQQQDDE) is disordered.

This sequence belongs to the DarP family.

The protein localises to the cytoplasm. In terms of biological role, member of a network of 50S ribosomal subunit biogenesis factors which assembles along the 30S-50S interface, preventing incorrect 23S rRNA structures from forming. Promotes peptidyl transferase center (PTC) maturation. This chain is Dual-action ribosomal maturation protein DarP, found in Sodalis glossinidius (strain morsitans).